Reading from the N-terminus, the 195-residue chain is SAGA-associated factor 11 homolog (195 aa).

The segment at 1–22 (MSAANMPTTTGAQGSGNQVPRT) is disordered. Residues 105 to 126 (CTCPNCDRLVAAARFAPHLEKC) form an SGF11-type zinc finger. Residues 140 to 195 (RLATKEGATSAHLHSSGNTGGTDDEDDVDWSSDKRRKKSNQNSRNNGSKKNNGKTF) form a disordered region. Position 171 is a phosphoserine (serine 171). Residues 179–195 (NQNSRNNGSKKNNGKTF) show a composition bias toward low complexity.

Belongs to the SGF11 family. As to quaternary structure, component of some SAGA transcription coactivator-HAT complexes, at least composed of Ada2b, not/nonstop, Pcaf/Gcn5, Sgf11 and Spt3. Within the SAGA complex, Sgf11, e(y)2, and not/nonstop form an additional subcomplex of SAGA called the DUB module (deubiquitination module). Interacts directly with not/nonstop. Interacts with the AMEX complex component xmas-2. Interacts with Cbp80; important for promoter recruitment of Sgf11 that is not associated with the DUB module.

Its subcellular location is the nucleus. It is found in the nucleoplasm. The protein localises to the cytoplasm. Its function is as follows. Component of the transcription regulatory histone acetylation (HAT) complex SAGA, a multiprotein complex that activates transcription by remodeling chromatin and mediating histone acetylation and deubiquitination. Within the SAGA complex, participates in a subcomplex that specifically deubiquitinates histone H2B. The SAGA complex is recruited to specific gene promoters by activators, where it is required for transcription. Required for nuclear receptor-mediated transactivation. Binds independently on SAGA to promoters in an RNA-dependent manner. Binds to mRNA and is essential for total mRNA export from the nucleus. Required to counteract heterochromatin silencing. Controls the development of neuronal connectivity in visual system by being required for accurate axon targeting in the optic lobe. Required for expression of ecdysone-induced genes such as br/broad. The chain is SAGA-associated factor 11 homolog from Drosophila sechellia (Fruit fly).